Here is a 239-residue protein sequence, read N- to C-terminus: Probable fimbrial chaperone YehC (239 aa).

The N-terminal stretch at 1–31 (MAAIPWRPFNLRGIKMKGLLSLLIFSMVLPA) is a signal peptide.

The protein belongs to the periplasmic pilus chaperone family.

The protein resides in the periplasm. Its function is as follows. Part of the yehABCD fimbrial operon. Could contribute to adhesion to various surfaces in specific environmental niches. This Escherichia coli (strain K12) protein is Probable fimbrial chaperone YehC (yehC).